A 757-amino-acid chain; its full sequence is Receptor protein kinase-like protein At4g34220 (757 aa).

A signal peptide spans 1–26; that stretch reads MTSNRSNLLFSLVLFHFLFVPTQLQA. 7 LRR repeats span residues 104–126, 128–150, 152–174, 176–198, 199–219, 220–242, and 245–267; these read YLRI…VFNA, ELQS…VNSV, NLQL…ISLL, NLTV…FEAA, QILD…LGGK, SLHY…FAEK, and ANAT…LSLL. The helical transmembrane segment at 339 to 359 threads the bilayer; the sequence is IAAITVADIVGLAFIGLLVLY. One can recognise a Protein kinase domain in the interval 471–753; it reads KASAYILGTT…KELVQVLEKI (283 aa). Residue Ser-473 is modified to Phosphoserine. Thr-494 carries the phosphothreonine modification. Residue Ser-553 is modified to Phosphoserine. Positions 633–654 are disordered; sequence ARESHTTGPTSSSPYQPPEWST. 2 positions are modified to phosphothreonine: Thr-638 and Thr-639. Residues 638 to 654 show a composition bias toward polar residues; it reads TTGPTSSSPYQPPEWST.

The protein belongs to the protein kinase superfamily.

Its subcellular location is the membrane. This is Receptor protein kinase-like protein At4g34220 from Arabidopsis thaliana (Mouse-ear cress).